The sequence spans 483 residues: Protein nucleotidyltransferase YdiU (483 aa).

ATP contacts are provided by Gly-81, Gly-83, Arg-84, Lys-103, Asp-115, Gly-116, Arg-166, and Arg-173. The active-site Proton acceptor is the Asp-244. The Mg(2+) site is built by Asn-245 and Asp-254. Residue Asp-254 participates in ATP binding.

The protein belongs to the SELO family. The cofactor is Mg(2+). Mn(2+) serves as cofactor.

It catalyses the reaction L-seryl-[protein] + ATP = 3-O-(5'-adenylyl)-L-seryl-[protein] + diphosphate. It carries out the reaction L-threonyl-[protein] + ATP = 3-O-(5'-adenylyl)-L-threonyl-[protein] + diphosphate. The enzyme catalyses L-tyrosyl-[protein] + ATP = O-(5'-adenylyl)-L-tyrosyl-[protein] + diphosphate. The catalysed reaction is L-histidyl-[protein] + UTP = N(tele)-(5'-uridylyl)-L-histidyl-[protein] + diphosphate. It catalyses the reaction L-seryl-[protein] + UTP = O-(5'-uridylyl)-L-seryl-[protein] + diphosphate. It carries out the reaction L-tyrosyl-[protein] + UTP = O-(5'-uridylyl)-L-tyrosyl-[protein] + diphosphate. Its function is as follows. Nucleotidyltransferase involved in the post-translational modification of proteins. It can catalyze the addition of adenosine monophosphate (AMP) or uridine monophosphate (UMP) to a protein, resulting in modifications known as AMPylation and UMPylation. The sequence is that of Protein nucleotidyltransferase YdiU from Shewanella pealeana (strain ATCC 700345 / ANG-SQ1).